We begin with the raw amino-acid sequence, 393 residues long: Protein TsgA (393 aa).

12 helical membrane passes run 11–31 (WISF…GMVM), 51–71 (FLNA…EIVP), 78–98 (FGFI…SLAL), 101–121 (AAMF…TFLI), 134–154 (LLFT…VAAF), 162–182 (WYWV…LTFG), 206–226 (IGVL…LGFI), 245–265 (ALVS…SFIL), 273–293 (ILTV…TGTQ), 298–318 (WFIL…ITLG), 332–352 (FILT…GPIV), and 361–381 (LLTA…LGFV).

Belongs to the major facilitator superfamily. TsgA family.

Its subcellular location is the cell inner membrane. The protein is Protein TsgA of Salmonella heidelberg (strain SL476).